The primary structure comprises 281 residues: Pantothenate synthetase (281 aa).

30 to 37 provides a ligand contact to ATP; sequence MGNLHQGH. Histidine 37 serves as the catalytic Proton donor. Residue glutamine 61 participates in (R)-pantoate binding. Glutamine 61 lines the beta-alanine pocket. ATP is bound at residue 149 to 152; the sequence is GNKD. Glutamine 155 is a binding site for (R)-pantoate. ATP is bound by residues isoleucine 178 and 186–189; that span reads MSSR.

Belongs to the pantothenate synthetase family. Homodimer.

Its subcellular location is the cytoplasm. The catalysed reaction is (R)-pantoate + beta-alanine + ATP = (R)-pantothenate + AMP + diphosphate + H(+). Its pathway is cofactor biosynthesis; (R)-pantothenate biosynthesis; (R)-pantothenate from (R)-pantoate and beta-alanine: step 1/1. Catalyzes the condensation of pantoate with beta-alanine in an ATP-dependent reaction via a pantoyl-adenylate intermediate. The chain is Pantothenate synthetase from Shewanella baltica (strain OS185).